A 213-amino-acid chain; its full sequence is Large ribosomal subunit protein uL3 (213 aa).

The protein belongs to the universal ribosomal protein uL3 family. As to quaternary structure, part of the 50S ribosomal subunit. Forms a cluster with proteins L14 and L19.

In terms of biological role, one of the primary rRNA binding proteins, it binds directly near the 3'-end of the 23S rRNA, where it nucleates assembly of the 50S subunit. This is Large ribosomal subunit protein uL3 from Petrotoga mobilis (strain DSM 10674 / SJ95).